A 491-amino-acid chain; its full sequence is Proline--tRNA ligase (491 aa).

It belongs to the class-II aminoacyl-tRNA synthetase family. ProS type 3 subfamily. In terms of assembly, homodimer.

It localises to the cytoplasm. The enzyme catalyses tRNA(Pro) + L-proline + ATP = L-prolyl-tRNA(Pro) + AMP + diphosphate. In terms of biological role, catalyzes the attachment of proline to tRNA(Pro) in a two-step reaction: proline is first activated by ATP to form Pro-AMP and then transferred to the acceptor end of tRNA(Pro). The polypeptide is Proline--tRNA ligase (Cytophaga hutchinsonii (strain ATCC 33406 / DSM 1761 / CIP 103989 / NBRC 15051 / NCIMB 9469 / D465)).